Consider the following 491-residue polypeptide: MAKFIMVVGTASNSGKTVLVSGICRMLVNQGYKVAPFKSQNMSLNSRVSVEDGEIAVAQYTQAIAAKVNPSIHFNPVLLKPKGNFISQVIVHGKPYKDMDYNEYRKEKNYFLEKIKESIEYLDKNYDYVVIEGAGSCCEINLLNDDIANLKVAELSNADAILVSDIDRGGVFASIYGTVNLLPENWKKLLKGFVINKFRGNIDVLKDGFEKIEELTNIPVIGTIPYDETLVLPEEDSQAIQGKKVFGNLKSPVEVNIVKFSKIANFTDLDPLSNDCLMKYIDFNDDITGDILILPGTRCSTVEMNLMKKYGLDKKIHEFINKGGIIFGICGGYQTLGKILIDENFSEGNVGTISGLDVFNMETTFGNKKAINNSNGILKINDMEYEVSGYELHEGYSVSKETPLITLSNGFGNLGDMYDGSFKQIENSYIFGTYLHGILENFEFRNYLVNLVLSKKNLKNISKDNYEKVLQENMDKLSKIIEESIDFSKIL.

Residues proline 252–phenylalanine 444 form the GATase cobBQ-type domain. The Nucleophile role is filled by cysteine 330. Residue histidine 436 is part of the active site.

Belongs to the CobB/CobQ family. CobQ subfamily.

It participates in cofactor biosynthesis; adenosylcobalamin biosynthesis. Functionally, catalyzes amidations at positions B, D, E, and G on adenosylcobyrinic A,C-diamide. NH(2) groups are provided by glutamine, and one molecule of ATP is hydrogenolyzed for each amidation. This Methanococcus vannielii (strain ATCC 35089 / DSM 1224 / JCM 13029 / OCM 148 / SB) protein is Probable cobyric acid synthase.